The chain runs to 1081 residues: Probable cellulose synthase A catalytic subunit 8 [UDP-forming] (1081 aa).

Residues 1 to 277 (MDGDADAVKS…PSSRINPYRM (277 aa)) lie on the Cytoplasmic side of the membrane. C19, C22, C38, C41, C46, C49, C61, and C64 together coordinate Zn(2+). The RING-type; degenerate zinc-finger motif lies at 19–65 (CQICGDGVGTTAEGDVFAACDVCGFPVCRPCYEYERKDGTQACPQCK). A disordered region spans residues 72-148 (KGSPAIRGEE…YDSGEIPRGY (77 aa)). A compositionally biased stretch (acidic residues) spans 81–91 (EGEDTDADDVS). Positions 103–112 (QKQKIADRMR) are enriched in basic and acidic residues. A helical transmembrane segment spans residues 278-298 (VIVLRLVVLSIFLHYRITNPV). Residues 299-300 (RN) lie on the Extracellular side of the membrane. Residues 301 to 321 (AYPLWLLSVICEIWFALSWIL) form a helical membrane-spanning segment. Residues 322 to 864 (DQFPKWFPIN…INTTIYPLTS (543 aa)) lie on the Cytoplasmic side of the membrane. UDP-alpha-D-glucose-binding residues include S360, K366, E367, and D396. D396 is a catalytic residue. Positions 450–477 (VKDRRAMKREYEEFKVRINGLVAKAQKV) form a coiled coil. K537 provides a ligand contact to UDP-alpha-D-glucose. 2 residues coordinate Mn(2+): K538 and D562. The tract at residues 660 to 684 (SLCGGRKKASKSKKKSSDKKKSNKH) is disordered. Residues 664-682 (GRKKASKSKKKSSDKKKSN) show a composition bias toward basic residues. Residue D781 is part of the active site. The chain crosses the membrane as a helical span at residues 865-885 (IPLLIYCVLPAICLLTGKFII). Residues 886-890 (PEISN) lie on the Extracellular side of the membrane. Residues 891–911 (FASIWFISLFISIFATGILEM) traverse the membrane as a helical segment. Residues 912-926 (RWSGVGIDEWWRNEQ) lie on the Cytoplasmic side of the membrane. The helical transmembrane segment at 927–947 (FWVIGGISAHLFAVFQGLLKV) threads the bilayer. The Extracellular portion of the chain corresponds to 948-977 (LAGIDTNFTVTSKASDEDGDFAELYMFKWT). N954 carries N-linked (GlcNAc...) asparagine glycosylation. The chain crosses the membrane as a helical span at residues 978–998 (TLLIPPTTILIINLVGVVAGI). Over 999–1009 (SYAINSGYQSW) the chain is Cytoplasmic. Residues 1010–1030 (GPLFGKLFFAFWVIVHLYPFL) form a helical membrane-spanning segment. Over 1031–1039 (KGLMGRQNR) the chain is Extracellular. Residues 1040–1060 (TPTIVVVWAILLASIFSLLWV) traverse the membrane as a helical segment. Residues 1061-1081 (RIDPFTTRVTGPDTQTCGINC) are Cytoplasmic-facing.

This sequence belongs to the glycosyltransferase 2 family. Plant cellulose synthase subfamily. It depends on Mn(2+) as a cofactor. Zn(2+) serves as cofactor.

It is found in the cell membrane. The catalysed reaction is [(1-&gt;4)-beta-D-glucosyl](n) + UDP-alpha-D-glucose = [(1-&gt;4)-beta-D-glucosyl](n+1) + UDP + H(+). Its pathway is glycan metabolism; plant cellulose biosynthesis. Probable catalytic subunit of cellulose synthase terminal complexes ('rosettes'), required for beta-1,4-glucan microfibril crystallization, a major mechanism of the cell wall formation. The protein is Probable cellulose synthase A catalytic subunit 8 [UDP-forming] (CESA8) of Oryza sativa subsp. japonica (Rice).